Reading from the N-terminus, the 131-residue chain is Profilin-3 (131 aa).

Belongs to the profilin family. In terms of assembly, occurs in many kinds of cells as a complex with monomeric actin in a 1:1 ratio.

It localises to the cytoplasm. The protein resides in the cytoskeleton. Functionally, binds to actin and affects the structure of the cytoskeleton. At high concentrations, profilin prevents the polymerization of actin, whereas it enhances it at low concentrations. By binding to PIP2, it inhibits the formation of IP3 and DG. This chain is Profilin-3, found in Hevea brasiliensis (Para rubber tree).